Consider the following 290-residue polypeptide: Acetylglutamate kinase (290 aa).

Substrate contacts are provided by residues 65–66 (GG), arginine 87, and asparagine 186.

The protein belongs to the acetylglutamate kinase family. ArgB subfamily.

The protein resides in the cytoplasm. It carries out the reaction N-acetyl-L-glutamate + ATP = N-acetyl-L-glutamyl 5-phosphate + ADP. It functions in the pathway amino-acid biosynthesis; L-arginine biosynthesis; N(2)-acetyl-L-ornithine from L-glutamate: step 2/4. Its function is as follows. Catalyzes the ATP-dependent phosphorylation of N-acetyl-L-glutamate. The protein is Acetylglutamate kinase of Mycobacterium sp. (strain KMS).